An 85-amino-acid chain; its full sequence is MKLFLLLLISASMLIDGLVNADGYIRGSNGCKVSCLWGNEGCNKECRAYGASYGYCWTWGLACWCQGLPDDKTWKSESNTCGGKK.

The signal sequence occupies residues 1-21 (MKLFLLLLISASMLIDGLVNA). Positions 22–82 (DGYIRGSNGC…TWKSESNTCG (61 aa)) constitute an LCN-type CS-alpha/beta domain. Cystine bridges form between Cys-31–Cys-81, Cys-35–Cys-56, Cys-42–Cys-63, and Cys-46–Cys-65. The residue at position 82 (Gly-82) is a Glycine amide.

As to expression, expressed by the venom gland.

The protein resides in the secreted. Its function is as follows. Depressant insect beta-toxins cause a transient contraction paralysis followed by a slow flaccid paralysis. They bind voltage-independently at site-4 of sodium channels (Nav) and shift the voltage of activation toward more negative potentials thereby affecting sodium channel activation and promoting spontaneous and repetitive firing. This toxin also displays an evident analgesic effect but is devoid of any toxicity on mice. The sequence is that of Beta-insect depressant toxin BmKITa from Olivierus martensii (Manchurian scorpion).